Here is a 383-residue protein sequence, read N- to C-terminus: ATP phosphoribosyltransferase regulatory subunit (383 aa).

It belongs to the class-II aminoacyl-tRNA synthetase family. HisZ subfamily. Heteromultimer composed of HisG and HisZ subunits.

The protein resides in the cytoplasm. Its pathway is amino-acid biosynthesis; L-histidine biosynthesis; L-histidine from 5-phospho-alpha-D-ribose 1-diphosphate: step 1/9. Its function is as follows. Required for the first step of histidine biosynthesis. May allow the feedback regulation of ATP phosphoribosyltransferase activity by histidine. The protein is ATP phosphoribosyltransferase regulatory subunit of Neisseria meningitidis serogroup C (strain 053442).